Reading from the N-terminus, the 137-residue chain is uncharacterized protein (137 aa).

This is an uncharacterized protein from Schizosaccharomyces pombe (strain 972 / ATCC 24843) (Fission yeast).